A 161-amino-acid polypeptide reads, in one-letter code: Transcription elongation factor GreA (161 aa).

Belongs to the GreA/GreB family.

In terms of biological role, necessary for efficient RNA polymerase transcription elongation past template-encoded arresting sites. The arresting sites in DNA have the property of trapping a certain fraction of elongating RNA polymerases that pass through, resulting in locked ternary complexes. Cleavage of the nascent transcript by cleavage factors such as GreA or GreB allows the resumption of elongation from the new 3'terminus. GreA releases sequences of 2 to 3 nucleotides. This Desulfotalea psychrophila (strain LSv54 / DSM 12343) protein is Transcription elongation factor GreA.